Reading from the N-terminus, the 525-residue chain is ATP synthase subunit alpha (525 aa).

An ATP-binding site is contributed by 169–176 (GDRQTGKT).

This sequence belongs to the ATPase alpha/beta chains family. F-type ATPases have 2 components, CF(1) - the catalytic core - and CF(0) - the membrane proton channel. CF(1) has five subunits: alpha(3), beta(3), gamma(1), delta(1), epsilon(1). CF(0) has three main subunits: a(1), b(2) and c(9-12). The alpha and beta chains form an alternating ring which encloses part of the gamma chain. CF(1) is attached to CF(0) by a central stalk formed by the gamma and epsilon chains, while a peripheral stalk is formed by the delta and b chains.

The protein localises to the cell membrane. It catalyses the reaction ATP + H2O + 4 H(+)(in) = ADP + phosphate + 5 H(+)(out). Produces ATP from ADP in the presence of a proton gradient across the membrane. The alpha chain is a regulatory subunit. The protein is ATP synthase subunit alpha of Mycoplasma mycoides subsp. mycoides SC (strain CCUG 32753 / NCTC 10114 / PG1).